Reading from the N-terminus, the 440-residue chain is C4-dicarboxylate transport protein (440 aa).

Helical transmembrane passes span 8 to 28 (LYLQVLLAVVLGALVGHLFPA), 40 to 60 (FIKLVKMLIAPIVFATVVTGI), 74 to 94 (LKGLLYFEVLTTVALAIGLVV), 147 to 167 (GDILQVLLFSVLFGAALAALK), 187 to 207 (IVGFVMRLAPVGAFGAMAFTV), 221 to 241 (LIACFYATSALFVVLMLGLVL), 288 to 308 (VVGLVVPMGYSFNLDGTSIYL), and 354 to 374 (AATLSAVGNIPVAGLALLLGV). The disordered stretch occupies residues 419 to 440 (EEVEPANEPEPPAIPAGAGLHG).

The protein belongs to the dicarboxylate/amino acid:cation symporter (DAACS) (TC 2.A.23) family.

It localises to the cell inner membrane. In terms of biological role, responsible for the transport of dicarboxylates such as succinate, fumarate, and malate from the periplasm across the membrane. This chain is C4-dicarboxylate transport protein, found in Anaeromyxobacter sp. (strain K).